Consider the following 324-residue polypeptide: Olfactory receptor 51D1 (324 aa).

Topologically, residues 1-38 (MQKPQLLVPIIATSNGNLVHAAYFLLVGIPGLGPTIHF) are extracellular. A helical transmembrane segment spans residues 39-59 (WLAFPLCFMYALATLGNLTIV). Topologically, residues 60–67 (LIIRVERR) are cytoplasmic. The chain crosses the membrane as a helical span at residues 68-88 (LHEPMYLFLAMLSTIDLVLSS). At 89-112 (ITMPKMASLFLMGIQEIEFNICLA) the chain is on the extracellular side. Cys110 and Cys202 are oxidised to a cystine. A helical transmembrane segment spans residues 113–133 (QMFLIHALSAVESAVLLAMAF). Topologically, residues 134-152 (DRFVAICHPLRHASVLTGC) are cytoplasmic. Residues 153-173 (TVAKIGLSALTRGFVFFFPLP) traverse the membrane as a helical segment. Residues 174 to 209 (FILKWLSYCQTHTVTHSFCLHQDIMKLSCTDTRVNV) are Extracellular-facing. The chain crosses the membrane as a helical span at residues 210–230 (VYGLFIILSVMGVDSLFIGFS). The Cytoplasmic segment spans residues 231–250 (YILILWAVLELSSRRAALKA). The helical transmembrane segment at 251–271 (FNTCISHLCAVLVFYVPLIGL) threads the bilayer. Over 272 to 285 (SVVHRLGGPTSLLH) the chain is Extracellular. A helical transmembrane segment spans residues 286–306 (VVMANTYLLLPPVVNPLVYGA). The Cytoplasmic portion of the chain corresponds to 307–324 (KTKEICSRVLCMFSQGGK).

Belongs to the G-protein coupled receptor 1 family.

It localises to the cell membrane. In terms of biological role, odorant receptor. In Homo sapiens (Human), this protein is Olfactory receptor 51D1 (OR51D1).